A 1032-amino-acid chain; its full sequence is Kinesin heavy chain isoform 5A (1032 aa).

Position 2 is an N-acetylalanine (A2). The Kinesin motor domain occupies 9 to 327; it reads SIKVLCRFRP…LMFGQRAKTI (319 aa). Residue 86–93 coordinates ATP; it reads GQTSSGKT. Residues 174 to 315 form a microtubule-binding region; sequence VSGPEEILDV…PSSYNDAETK (142 aa). Residues 271–361 are necessary for interaction with ZFYVE27; it reads EGTKSYVPYR…KTKAQKETIA (91 aa). The stretch at 331–906 forms a coiled coil; the sequence is ASVNLELTAE…VDRIKEAVRY (576 aa). Residues 353–1032 form an interaction with BICD2 region; it reads TKAQKETIAK…FPLHQETAAS (680 aa). Phosphothreonine is present on T397. Positions 904-939 are disordered; that stretch reads VRYKSSGKRGHSAQIAKPVRPGHYPASSPTNPYGTR. Residues 907-1032 are globular; the sequence is KSSGKRGHSA…FPLHQETAAS (126 aa).

The protein belongs to the TRAFAC class myosin-kinesin ATPase superfamily. Kinesin family. Kinesin subfamily. As to quaternary structure, oligomer composed of two heavy chains and two light chains. Interacts with GRIP1. Interacts with FMR1 (via C-terminus); this interaction is increased in a mGluR-dependent manner. Interacts with BORCS5. Interacts with ZFYVE27. Interacts with VAPA, VAPB, SURF4, RAB11A (GDP-bound form), RAB11B (GDP-bound form) and RTN3 in a ZFYVE27-dependent manner. Interacts with BICD2. Interacts with DTNB.

It localises to the cytoplasm. The protein localises to the perinuclear region. It is found in the cytoskeleton. The protein resides in the perikaryon. The catalysed reaction is ATP + H2O + a kinesin associated with a microtubule at position (n) = ADP + phosphate a kinesin associated with a microtubule at position (n+1, toward the plus end).. Its function is as follows. Microtubule-dependent motor required for slow axonal transport of neurofilament proteins (NFH, NFM and NFL). Can induce formation of neurite-like membrane protrusions in non-neuronal cells in a ZFYVE27-dependent manner. The ZFYVE27-KIF5A complex contributes to the vesicular transport of VAPA, VAPB, SURF4, RAB11A, RAB11B and RTN3 proteins in neurons. Required for anterograde axonal transportation of MAPK8IP3/JIP3 which is essential for MAPK8IP3/JIP3 function in axon elongation. This Pongo abelii (Sumatran orangutan) protein is Kinesin heavy chain isoform 5A (KIF5A).